The following is a 214-amino-acid chain: Large ribosomal subunit protein bL25 (214 aa).

Residues 189 to 214 are disordered; sequence IHASRKAKADEDEAAEGEEGEEGAED. Over residues 198–214 the composition is skewed to acidic residues; that stretch reads DEDEAAEGEEGEEGAED.

It belongs to the bacterial ribosomal protein bL25 family. CTC subfamily. In terms of assembly, part of the 50S ribosomal subunit; part of the 5S rRNA/L5/L18/L25 subcomplex. Contacts the 5S rRNA. Binds to the 5S rRNA independently of L5 and L18.

In terms of biological role, this is one of the proteins that binds to the 5S RNA in the ribosome where it forms part of the central protuberance. This Alkalilimnicola ehrlichii (strain ATCC BAA-1101 / DSM 17681 / MLHE-1) protein is Large ribosomal subunit protein bL25.